Reading from the N-terminus, the 198-residue chain is Putative pseudouridine methyltransferase (198 aa).

S-adenosyl-L-methionine contacts are provided by M132 and C186.

Belongs to the methyltransferase superfamily. TrmY family.

It localises to the cytoplasm. The polypeptide is Putative pseudouridine methyltransferase (Shewanella baltica (strain OS185)).